Here is a 392-residue protein sequence, read N- to C-terminus: Telomere-binding protein subunit beta (392 aa).

A disordered region spans residues 234–392; that stretch reads QQVESVQVQP…ASKASKRSKK (159 aa). Residues 247-256 show a composition bias toward basic residues; the sequence is GGAKGKKKAA. Residues 257–268 are compositionally biased toward low complexity; sequence TKSATKKTVAAK. The span at 269–284 shows a compositional bias: basic and acidic residues; it reads KTAESADVRKSVDKIV. Positions 328-343 are enriched in polar residues; sequence SPSGKKSTKTTDQMTM. Residues 374 to 384 show a composition bias toward low complexity; sequence GKASATSGKAS.

In terms of assembly, heterodimer of an alpha and a beta subunit.

The protein localises to the nucleus. Its subcellular location is the chromosome. It is found in the telomere. Functionally, may function as protective capping of the single-stranded telomeric overhang. May also participate in telomere length regulation during DNA replication. This is Telomere-binding protein subunit beta (STY43) from Stylonychia mytilus (Ciliate).